The primary structure comprises 600 residues: Gamma-terpinene synthase, chloroplastic (600 aa).

The transit peptide at 1–40 (MALNLLSSLPAACNFTRLSLPLSSKVNGFVPPITQVQYPM) directs the protein to the chloroplast. Mg(2+) contacts are provided by D353, D357, D498, and E506. The DDXXD motif signature appears at 353–357 (DDVYD).

It belongs to the terpene synthase family. Mn(2+) serves as cofactor. Requires Mg(2+) as cofactor.

Its subcellular location is the plastid. It is found in the chloroplast. The enzyme catalyses (2E)-geranyl diphosphate = gamma-terpinene + diphosphate. Its pathway is secondary metabolite biosynthesis; terpenoid biosynthesis. Inhibited by 100 mM KCl. Monoterpene synthase which catalyzes the conversion of geranyl diphosphate to gamma-terpinene and the minor products limonene, alpha-pinene, beta-pinene, alpha-terpinolene, alpha-thujene, alpha-terpinene, myrcene and sabinene. The sequence is that of Gamma-terpinene synthase, chloroplastic from Citrus limon (Lemon).